We begin with the raw amino-acid sequence, 467 residues long: MNSLLLKLLLCVAITAAFPADKQDEPPATKEEMAENYLKRFYSLGTDGGPVGRKKHIQPFTEKLEQMQKFFGLKVTGTLDPKTVEVMEKPRCGVYDVGQYSTVAKSSAWQKKDLTYRILNFTPDLPQADVETAIQRAFKVWSDVTPLTFTRIYNEVSDIEISFTAGDHKDNSPFDGSGGILAHAFQPGNGIGGDAHFDEDETWTKTSEIYNLFLVAAHEFGHSLGLSHSTDQGALMYPTYSNTDPKTFQLPQDDINAIQYLYGKSSNPVQPTGPSTPSRCDPNVVFNAVTTMRGELIFFVKRFLWRKHPQASEAELMFVQAFWPSLPTNIDAAYENPITEQILVFKGSKYTALDGFDVVQGYPRNIYSLGFPKTVKRIDAAVHIEQLGKTYFFAAKKYWSYDEDKKQMDKGFPKQISNDFPGIPDKIDAAFYYRGRLYFFIGRSQFEYNINSKRIVQVLRSNSWLGC.

Positions 1 to 17 are cleaved as a signal peptide; it reads MNSLLLKLLLCVAITAA. A propeptide spanning residues 18–99 is cleaved from the precursor; the sequence is FPADKQDEPP…PRCGVYDVGQ (82 aa). Positions 90–97 match the Cysteine switch motif; the sequence is PRCGVYDV. Cys92 and His218 together coordinate Zn(2+). Glu219 is a catalytic residue. Zn(2+) contacts are provided by His222 and His228. Hemopexin repeat units follow at residues 277–326, 327–373, 375–423, and 424–467; these read PSRC…WPSL, PTNI…GFPK, VKRI…FPGI, and PDKI…WLGC. Cys280 and Cys467 are oxidised to a cystine.

The protein belongs to the peptidase M10A family. Requires Zn(2+) as cofactor. Ca(2+) is required as a cofactor. As to expression, expressed only transiently in whole animal, at time when tadpole feeding begins.

Its subcellular location is the secreted. It localises to the extracellular space. The protein resides in the extracellular matrix. Up-regulated in the tail by thyroid hormone. Its function is as follows. Cleaves collagen type I. May play a role in larval tissue degeneration and adult organogenesis during amphibian metamorphosis. May be involved in tail resorption. The protein is Matrix metalloproteinase-18 (mmp18) of Xenopus laevis (African clawed frog).